Reading from the N-terminus, the 530-residue chain is Na(+)/H(+) antiporter NhaB (530 aa).

A run of 13 helical transmembrane segments spans residues 13–33, 34–54, 64–84, 90–110, 113–133, 136–156, 205–225, 234–254, 306–326, 351–371, 378–400, 450–470, and 481–501; these read FLGK…IINP, FVFF…EFIF, PLQP…TSPA, LVAN…IYFM, LLLY…LLSL, CLMA…AVVI, LLMH…VGEP, AGWL…PVFM, ALIA…VGLI, EEAL…AVII, PIIS…IANG, ATPN…APLI, and ALPY…FMLL.

It belongs to the NhaB Na(+)/H(+) (TC 2.A.34) antiporter family.

The protein localises to the cell inner membrane. The enzyme catalyses 2 Na(+)(in) + 3 H(+)(out) = 2 Na(+)(out) + 3 H(+)(in). Functionally, na(+)/H(+) antiporter that extrudes sodium in exchange for external protons. The polypeptide is Na(+)/H(+) antiporter NhaB (Photobacterium profundum (strain SS9)).